The chain runs to 807 residues: Potassium transporter 9 (807 aa).

Residues 1 to 59 (MAERVEASSVPEGENTIEEREVGAMWELEQKLDQPMDEEANKLNNMYREKGLSMLMLLR) lie on the Cytoplasmic side of the membrane. Residues 60–80 (LSFQSLGIVYGDLGTSPLYVF) traverse the membrane as a helical segment. The Extracellular portion of the chain corresponds to 81–96 (YNTFPDGIDDSEDVIG). Residues 97–117 (ALSLIIYSLLLIPLIKYVFIV) traverse the membrane as a helical segment. Topologically, residues 118 to 185 (CKANDNGQGG…EGKEWRKRAL (68 aa)) are cytoplasmic. A helical membrane pass occupies residues 186–206 (LVVVLLGTCMMIGDGILTPAI). Over 207-225 (SVLSATGGIKVNNPKMSGD) the chain is Extracellular. The helical transmembrane segment at 226–246 (IVVLVAIVILIGLFSMQHYGT) threads the bilayer. Topologically, residues 247 to 248 (DK) are cytoplasmic. Residues 249–269 (VGWLFAPIVLIWFLFIGATGM) form a helical membrane-spanning segment. Topologically, residues 270 to 299 (YNICKYDTSVLKAFSPTYIYLYFKRRGRDG) are extracellular. The helical transmembrane segment at 300-320 (WISLGGILLSITGTEALYADI) threads the bilayer. Topologically, residues 321-322 (AY) are cytoplasmic. Residues 323–343 (FPLLAIQLAFTFFVFPCLLLA) traverse the membrane as a helical segment. Over 344 to 369 (YCGQAAYLVIHKEHYQDAFYASIPDS) the chain is Extracellular. The helical transmembrane segment at 370–390 (VYWPMFIVATGAAIVGSQATI) threads the bilayer. The Cytoplasmic segment spans residues 391 to 417 (SGTYSIVKQAVAHGCFPRVKIVHTSKK). A helical transmembrane segment spans residues 418–438 (FLGQIYCPDINWILMLGCIAV). At 439-454 (TASFKKQSQIGNAYGT) the chain is on the extracellular side. The chain crosses the membrane as a helical span at residues 455-475 (AVVLVMLVTTLLMVLIMLLVW). Residues 476–481 (HCHWIL) are Cytoplasmic-facing. Residues 482-502 (VLIFTFLSFFVELSYFSAVIF) traverse the membrane as a helical segment. At 503–507 (KIDEG) the chain is on the extracellular side. The helical transmembrane segment at 508–528 (GWVPLIIAAISLLVMSVWHYA) threads the bilayer. Topologically, residues 529–807 (TVKKYEFEMH…LLNVGQVFYV (279 aa)) are cytoplasmic.

Belongs to the HAK/KUP transporter (TC 2.A.72.3) family.

It localises to the cell membrane. Putative potassium transporter. This chain is Potassium transporter 9 (POT9), found in Arabidopsis thaliana (Mouse-ear cress).